A 343-amino-acid polypeptide reads, in one-letter code: ATP-dependent 6-phosphofructokinase (343 aa).

Residues Gly10 and 103–106 (GEGT) each bind ATP. A Mg(2+)-binding site is contributed by Glu104. Substrate is bound by residues 126–128 (TID), Arg163, 170–172 (MGR), Glu223, Arg267, and 273–276 (HVQR). The active-site Proton acceptor is Asp128.

Belongs to the phosphofructokinase type A (PFKA) family. Mixed-substrate PFK group III subfamily. As to quaternary structure, homodimer or homotetramer. Requires Mg(2+) as cofactor.

The protein resides in the cytoplasm. It catalyses the reaction beta-D-fructose 6-phosphate + ATP = beta-D-fructose 1,6-bisphosphate + ADP + H(+). Its pathway is carbohydrate degradation; glycolysis; D-glyceraldehyde 3-phosphate and glycerone phosphate from D-glucose: step 3/4. Catalyzes the phosphorylation of D-fructose 6-phosphate to fructose 1,6-bisphosphate by ATP, the first committing step of glycolysis. This is ATP-dependent 6-phosphofructokinase from Mycobacterium leprae (strain TN).